A 201-amino-acid polypeptide reads, in one-letter code: LexA repressor (201 aa).

Positions 28–48 (RAEIAARLGFRSPNAAEEHLK) form a DNA-binding region, H-T-H motif. Residues Ser118 and Lys155 each act as for autocatalytic cleavage activity in the active site.

It belongs to the peptidase S24 family. In terms of assembly, homodimer.

The enzyme catalyses Hydrolysis of Ala-|-Gly bond in repressor LexA.. Represses a number of genes involved in the response to DNA damage (SOS response), including recA and lexA. In the presence of single-stranded DNA, RecA interacts with LexA causing an autocatalytic cleavage which disrupts the DNA-binding part of LexA, leading to derepression of the SOS regulon and eventually DNA repair. The sequence is that of LexA repressor from Photorhabdus laumondii subsp. laumondii (strain DSM 15139 / CIP 105565 / TT01) (Photorhabdus luminescens subsp. laumondii).